Reading from the N-terminus, the 271-residue chain is MAKVPDMFEDLKNCYSENEEDSSSIDHLFLNQKSFYDVSYGPLHESCMDQSVSLSISEISKTSKLSFKQSMVVVSTNGKVLKKRRLSLSQSIADDNLEAIANDSEEEIIKPRSAPFSFLSNMTYHIIRIIKHESILNDTLNQTIIRANDQYLTAAAIHNLDEAVKFDMGAYTSSKDDTKVPVILRISKTQLYVSAQDEDQPVLLKEMPEIPKTTTGGETNSLSSWETRGTKNYFISVAHPNLFIATKHDNWVCLAKGLPSITDFQILENQA.

A propeptide spanning residues 1-112 (MAKVPDMFED…DSEEEIIKPR (112 aa)) is cleaved from the precursor. Lys-82 is subject to N6-acetyllysine. The interval 82–86 (KKRRL) is nuclear localization signal (NLS). Position 87 is a phosphoserine (Ser-87). N-linked (GlcNAc...) asparagine glycans are attached at residues Asn-102 and Asn-141.

It belongs to the IL-1 family. In terms of assembly, monomer. Interacts with TMED10; the interaction mediates the translocation from the cytoplasm into the ERGIC (endoplasmic reticulum-Golgi intermediate compartment) and thereby secretion. Interacts with IL1R1. Interacts with S100A13; this interaction is the first step in the export of IL1A, followed by direct translocation of this complex across the plasma membrane. Post-translationally, acetylated within its nuclear localization sequence, which impacts subcellular localization. Proteolytic processed by CAPN1 in a calcium-dependent manner. Cleavage from 31 kDa precursor to 18 kDa biologically active molecules. In terms of processing, phosphorylated. Phosphorylation greatly enhances susceptibility to digestion and promotes the conversion of pre-IL1A alpha to the biologically active IL1A.

It is found in the nucleus. The protein localises to the cytoplasm. The protein resides in the secreted. Functionally, cytokine constitutively present intracellularly in nearly all resting non-hematopoietic cells that plays an important role in inflammation and bridges the innate and adaptive immune systems. After binding to its receptor IL1R1 together with its accessory protein IL1RAP, forms the high affinity interleukin-1 receptor complex. Signaling involves the recruitment of adapter molecules such as MYD88, IRAK1 or IRAK4. In turn, mediates the activation of NF-kappa-B and the three MAPK pathways p38, p42/p44 and JNK pathways. Within the cell, acts as an alarmin and cell death results in its liberation in the extracellular space after disruption of the cell membrane to induce inflammation and alert the host to injury or damage. In addition to its role as a danger signal, which occurs when the cytokine is passively released by cell necrosis, directly senses DNA damage and acts as signal for genotoxic stress without loss of cell integrity. This is Interleukin-1 alpha (IL1A) from Cercocebus atys (Sooty mangabey).